The chain runs to 490 residues: GTPase Der (490 aa).

EngA-type G domains lie at 3 to 166 (PVVA…MEDL) and 203 to 376 (IKLA…DSST). GTP-binding positions include 9–16 (GRPNVGKS), 56–60 (DTGGI), 118–121 (NKTD), 209–216 (GRPNVGKS), 256–260 (DTAGV), and 321–324 (NKWD). The KH-like domain maps to 377–461 (RRVGTSMLTR…PIRIQFKEGE (85 aa)).

It belongs to the TRAFAC class TrmE-Era-EngA-EngB-Septin-like GTPase superfamily. EngA (Der) GTPase family. In terms of assembly, associates with the 50S ribosomal subunit.

Its function is as follows. GTPase that plays an essential role in the late steps of ribosome biogenesis. The sequence is that of GTPase Der from Escherichia fergusonii (strain ATCC 35469 / DSM 13698 / CCUG 18766 / IAM 14443 / JCM 21226 / LMG 7866 / NBRC 102419 / NCTC 12128 / CDC 0568-73).